Reading from the N-terminus, the 2332-residue chain is Genome polyprotein (2332 aa).

The region spanning 1–201 (MNTTNCFIAL…WKTQVQKKLK (201 aa)) is the Peptidase C28 domain. Residues 1 to 1480 (MNTTNCFIAL…SFVKRAFKRL (1480 aa)) lie on the Cytoplasmic side of the membrane. Residues cysteine 51, histidine 148, and aspartate 163 each act as for leader protease activity in the active site. 2 disordered regions span residues 199 to 218 (KLKGAGQSSPATGSQNQSGN) and 237 to 264 (TQLGDNTISGGSNEGSTDTTSTHTTNTQ). The N-myristoyl glycine; by host moiety is linked to residue glycine 202. 2 stretches are compositionally biased toward polar residues: residues 204–218 (GQSSPATGSQNQSGN) and 237–251 (TQLGDNTISGGSNEG). The span at 252–264 (STDTTSTHTTNTQ) shows a compositional bias: low complexity. Positions 789–797 (ALLRAATYY) are antigenic epitope. A Cell attachment site motif is present at residues 867–870 (RSGD). The region spanning 1189-1353 (NVHIANLCKV…DGYKINNKLD (165 aa)) is the SF3 helicase domain. 1217-1224 (GKSGQGKS) lines the ATP pocket. An intramembrane segment occupies 1481–1501 (KENFEIVALCLTLLANIVIMI). Topologically, residues 1502–2332 (RETRKRQKMV…RWVNAVCGDA (831 aa)) are cytoplasmic. Composition is skewed to basic and acidic residues over residues 1529–1538 (KTLDEAEKNP) and 1549–1563 (FRERSLTGQKVRDDV). The interval 1529 to 1588 (KTLDEAEKNPLETSGASTVGFRERSLTGQKVRDDVSSEPAQPAEDQPQAEGPYSGPLERQ) is disordered. O-(5'-phospho-RNA)-tyrosine occurs at positions 1581, 1604, and 1628. The 197-residue stretch at 1652 to 1848 (APPTDLQKMV…YCSCVSRSML (197 aa)) folds into the Peptidase C3 domain. Histidine 1695 acts as the For protease 3C activity; Proton donor/acceptor in catalysis. Catalysis depends on for protease 3C activity residues aspartate 1733 and cysteine 1812. Residues 1878–1886 (MRKTKLAPT) carry the Nuclear localization signal motif. Residues 2096–2214 (RNVWDVDYSA…ASDYDLDFEA (119 aa)) enclose the RdRp catalytic domain. Aspartate 2200 functions as the For RdRp activity in the catalytic mechanism.

The protein belongs to the picornaviruses polyprotein family. In terms of assembly, interacts with host ISG15. Interacts (via R-G-D motif) with host ITGAV/ITGB6. Interacts with host MAVS; this interaction inhibits binding of host TRAF3 to MAVS, thereby suppressing interferon-mediated responses. As to quaternary structure, forms homooligomers. In terms of assembly, homohexamer. Interacts with host VIM. Interacts with host BECN1. Interacts with host DCTN3. As to quaternary structure, interacts with RNA-dependent RNA polymerase; this interaction allows 3B-1 to binds 2 polymerases and act as a primer. It also allows the recruitment of the RNA-dependent RNA polymerase to host membranes. In terms of assembly, interacts with RNA-dependent RNA polymerase; this interaction allows 3B-2 to act as a primer. Interacts with RNA-dependent RNA polymerase; this interaction allows 3B-3 to act as a primer. As to quaternary structure, interacts with 3B-1; this interaction allows 3B-1 to binds 2 polymerases and act as a primer. It also allows the recruitment of the RNA-dependent RNA polymerase to host membranes. Interacts with 3B-2; this interaction allows 3B-2 to act as a primer. Interacts with 3B-3; this interaction allows 3B-3 to act as a primer. Removes six residues from its own C-terminus, generating sLb(pro). Post-translationally, specific enzymatic cleavages in vivo by the viral proteases yield a variety of precursors and mature proteins. The polyprotein seems to be cotranslationally cleaved at the 2A/2B junction by a ribosomal skip from one codon to the next without formation of a peptide bond. This process would release the L-P1-2A peptide from the translational complex. In terms of processing, during virion maturation, immature virions are rendered infectious following cleavage of VP0 into VP4 and VP2. This maturation seems to be an autocatalytic event triggered by the presence of RNA in the capsid and is followed by a conformational change of the particle. Myristoylation is required during RNA encapsidation and formation of the mature virus particle. Post-translationally, uridylylated by the polymerase and covalently linked to the 5'-end of genomic RNA. These uridylylated forms act as a nucleotide-peptide primer for the polymerase.

It is found in the host nucleus. Its subcellular location is the host cytoplasm. The protein resides in the virion. It localises to the host endoplasmic reticulum membrane. The protein localises to the host cytoplasmic vesicle membrane. It carries out the reaction Autocatalytically cleaves itself from the polyprotein of the foot-and-mouth disease virus by hydrolysis of a Lys-|-Gly bond, but then cleaves host cell initiation factor eIF-4G at bonds -Gly-|-Arg- and -Lys-|-Arg-.. The catalysed reaction is a ribonucleoside 5'-triphosphate + H2O = a ribonucleoside 5'-diphosphate + phosphate + H(+). The enzyme catalyses RNA(n) + a ribonucleoside 5'-triphosphate = RNA(n+1) + diphosphate. It catalyses the reaction Selective cleavage of Gln-|-Gly bond in the poliovirus polyprotein. In other picornavirus reactions Glu may be substituted for Gln, and Ser or Thr for Gly.. In terms of biological role, autocatalytically cleaves itself from the polyprotein at the L/VP0 junction. Also cleaves the host translation initiation factors EIF4G1 and EIF4G3, in order to shut off the capped cellular mRNA transcription. Plays a role in counteracting host innate antiviral response using diverse mechanisms. Possesses a deubiquitinase activity acting on both 'Lys-48' and 'Lys-63'-linked polyubiquitin chains. In turn, inhibits the ubiquitination and subsequent activation of key signaling molecules of type I IFN response such as host RIGI, TBK1, TRAF3 and TRAF6. Inhibits host NF-kappa-B activity by inducing a decrease in RELA mRNA levels. Cleaves a peptide bond in the C-terminus of host ISG15, resulting in the damaging of this modifier that can no longer be attached to target proteins. Also cleaves host G3BP1 and G3BP2 in order to inhibit cytoplasmic stress granules assembly. Its function is as follows. Lies on the inner surface of the capsid shell. After binding to the host receptor, the capsid undergoes conformational changes. Capsid protein VP4 is released, capsid protein VP1 N-terminus is externalized, and together, they shape a pore in the host membrane through which the viral genome is translocated into the host cell cytoplasm. After genome has been released, the channel shrinks. Forms an icosahedral capsid of pseudo T=3 symmetry with capsid proteins VP1 and VP3. The capsid is composed of 60 copies of each capsid protein organized in the form of twelve pentamers and encloses the viral positive strand RNA genome. Upon acidifcation in the endosome, dissociates into pentamers. Functionally, forms an icosahedral capsid of pseudo T=3 symmetry with capsid proteins VP2 and VP3. The capsid is composed of 60 copies of each capsid protein organized in the form of twelve pentamers and encloses the viral positive strand RNA genome. Mediates cell entry by attachment to an integrin receptor, usually host ITGAV/ITGB6. In addition, targets host MAVS to suppress type I IFN pathway. Upon acidifcation in the endosome, dissociates into pentamers. In terms of biological role, forms an icosahedral capsid of pseudo T=3 symmetry with capsid proteins VP0 and VP3. The capsid is composed of 60 copies of each capsid protein organized in the form of twelve pentamers and encloses the viral positive strand RNA genome. Its function is as follows. Mediates self-processing of the polyprotein by a translational effect termed 'ribosome skipping'. Mechanistically, 2A-mediated cleavage occurs between the C-terminal glycine and the proline of the downstream protein 2B. In the case of foot-and-mouth disease virus, the 2A oligopeptide is post-translationally 'trimmed' from the C-terminus of the upstream protein 1D by 3C proteinase. Plays an essential role in the virus replication cycle by acting as a viroporin. Creates a pore in the host endoplasmic reticulum and as a consequence releases Ca2+ in the cytoplasm of infected cell. In turn, high levels of cytoplasmic calcium may trigger membrane trafficking and transport of viral ER-associated proteins to viroplasms, sites of viral genome replication. Functionally, associates with and induces structural rearrangements of intracellular membranes. Triggers host autophagy by interacting with host BECN1 and thereby promotes viral replication. Participates in viral replication and interacts with host DHX9. Displays RNA-binding, nucleotide binding and NTPase activities. May play a role in virion morphogenesis and viral RNA encapsidation by interacting with the capsid protein VP3. In terms of biological role, plays important roles in virus replication, virulence and host range. Cooperates with host DDX56 to inhibit IRF3 nuclear translocation and subsequent type I interferon production. Its function is as follows. Covalently linked to the 5'-end of both the positive-strand and negative-strand genomic RNAs. Acts as a genome-linked replication primer. Covalently linked to the 5'-end0 of both the positive-strand and negative-strand genomic RNAs. Acts as a genome-linked replication primer. Functionally, cysteine protease that generates mature viral proteins from the precursor polyprotein. In addition to its proteolytic activity, binds to viral RNA and thus influences viral genome replication. RNA and substrate bind cooperatively to the protease. In terms of biological role, RNA-directed RNA polymerase 3D-POL replicates genomic and antigenomic RNA by recognizing replications specific signals. Covalently attaches UMP to a tyrosine of VPg, which is used to prime RNA synthesis. The positive stranded RNA genome is first replicated at virus induced membranous vesicles, creating a dsRNA genomic replication form. This dsRNA is then used as template to synthesize positive stranded RNA genomes. ss(+)RNA genomes are either translated, replicated or encapsidated. In Bos taurus (Bovine), this protein is Genome polyprotein.